The following is a 270-amino-acid chain: Putative pyruvate, phosphate dikinase regulatory protein (270 aa).

ADP is bound at residue 153–160 (GVSRTSKT).

Belongs to the pyruvate, phosphate/water dikinase regulatory protein family. PDRP subfamily.

It carries out the reaction N(tele)-phospho-L-histidyl/L-threonyl-[pyruvate, phosphate dikinase] + ADP = N(tele)-phospho-L-histidyl/O-phospho-L-threonyl-[pyruvate, phosphate dikinase] + AMP + H(+). The catalysed reaction is N(tele)-phospho-L-histidyl/O-phospho-L-threonyl-[pyruvate, phosphate dikinase] + phosphate + H(+) = N(tele)-phospho-L-histidyl/L-threonyl-[pyruvate, phosphate dikinase] + diphosphate. Its function is as follows. Bifunctional serine/threonine kinase and phosphorylase involved in the regulation of the pyruvate, phosphate dikinase (PPDK) by catalyzing its phosphorylation/dephosphorylation. The chain is Putative pyruvate, phosphate dikinase regulatory protein from Halalkalibacterium halodurans (strain ATCC BAA-125 / DSM 18197 / FERM 7344 / JCM 9153 / C-125) (Bacillus halodurans).